Consider the following 511-residue polypeptide: LEM domain-containing protein 2 (511 aa).

Ala2 bears the N-acetylalanine mark. An LEM domain is found at 2–42 (AGLSDLELRRELQALGFQPGPITDTTRNVYRNKLRRLRGEA). Disordered stretches follow at residues 18-110 (FQPG…SDAS) and 128-206 (GLSY…AGRT). Basic and acidic residues predominate over residues 38–80 (LRGEARLRDDERLREDAGPREDAGPRGPERQREEARLREEAPL). An interaction with lamin A/C complexes region spans residues 80–112 (LRARPAASVLRSEPWPLSPSPPAPSAASDASGP). The interval 80–141 (LRARPAASVL…PPHAGPGPLR (62 aa)) is required for nuclear retention and interaction with LMNA isoform C. 2 stretches are compositionally biased toward low complexity: residues 81–94 (RARPAASVLRSEPW) and 172–183 (APPSASARPHSA). 2 helical membrane passes run 221-241 (LLLWASLGLLLGFLAILWVKM) and 385-405 (VTHVLIFFWCLAFLWGLLILL). The tract at residues 403–511 (ILLKYRWRKL…KPSSFSDSER (109 aa)) is winged-Helix (WH). Ser505, Ser507, and Ser509 each carry phosphoserine.

In terms of assembly, interacts (via N-terminus) with LMNA isoform C (via C-terminus) (in vitro). Interacts (via LEM domain) with BANF1. Interacts (via C-terminus) with CHMP7. Interacts (via N-terminus) with tubulin; the interaction causes microtubule bundling and stabilization (in vitro). In terms of processing, phosphorylated; strongly phosphorylated in mitosis compared to G1/S. In terms of tissue distribution, ubiquitously expressed, including liver, brain, heart, skeletal muscle, lung, testis, spleen, kidney and white adipose tissue.

The protein localises to the nucleus inner membrane. It is found in the nucleus envelope. The protein resides in the cytoplasm. It localises to the cytoskeleton. Its subcellular location is the spindle. In terms of biological role, nuclear lamina-associated inner nuclear membrane protein that is involved in nuclear structure organization and maintenance of nuclear envelope (NE) integrity and NE reformation after mitosis. Plays a role as transmembrane adapter for the endosomal sorting complexes required for transport (ESCRT), and is thereby involved in ESCRT-mediated NE reformation. Promotes ESCRT-mediated NE closure by recruiting CHMP7 and downstream ESCRT-III proteins IST1/CHMP8 and CHMP2A to the reforming NE during anaphase. During nuclear reassembly, condenses into a liquid-like coating around microtubule spindles and coassembles with CHMP7 to form a macromolecular O-ring seal at the confluence between membranes, chromatin, and the spindle to facilitate early nuclear sealing. Plays a role in the organization of heterochromatin associated with the NE and in the maintenance of NE organization under mechanical stress. Required for embryonic development and is involved in regulation of several signaling pathways such as MAPK and AKT. Required for myoblast differentiation involving regulation of ERK signaling. Essential for cardiac homeostasis and proper heart function. This is LEM domain-containing protein 2 (Lemd2) from Mus musculus (Mouse).